A 261-amino-acid polypeptide reads, in one-letter code: Sepiapterin reductase (261 aa).

N-acetylmethionine is present on M1. NADP(+) is bound at residue 14–20; that stretch reads GASRGFG. A Phosphoserine modification is found at S32. NADP(+) contacts are provided by residues 42–43 and 69–70; these read RN and DL. Position 103 is a phosphoserine (S103). Substrate-binding positions include 157 to 158 and Y170; that span reads SL. K174 provides a ligand contact to NADP(+). G199 serves as a coordination point for substrate. 201–206 provides a ligand contact to NADP(+); the sequence is LDTDMQ. Phosphoserine; by CaMK2; in vitro is present on S213. D257 is a substrate binding site.

It belongs to the sepiapterin reductase family. As to quaternary structure, homodimer. Post-translationally, in vitro phosphorylation of Ser-213 by CaMK2 does not change kinetic parameters.

It is found in the cytoplasm. The enzyme catalyses L-erythro-7,8-dihydrobiopterin + NADP(+) = L-sepiapterin + NADPH + H(+). It carries out the reaction (6R)-L-erythro-5,6,7,8-tetrahydrobiopterin + 2 NADP(+) = 6-pyruvoyl-5,6,7,8-tetrahydropterin + 2 NADPH + 2 H(+). Functionally, catalyzes the final one or two reductions in tetra-hydrobiopterin biosynthesis to form 5,6,7,8-tetrahydrobiopterin. This Homo sapiens (Human) protein is Sepiapterin reductase (SPR).